We begin with the raw amino-acid sequence, 100 residues long: MNLTPREKDKLLISMAAMVARRRLERGVKLNHPEAIALITDFVVEGARDGRSVAELMEAGAHVLTRDQVMEGIAEMIHDIQIEATFPDGTKLVTVHEPIR.

Belongs to the urease gamma subunit family. In terms of assembly, heterotrimer of UreA (gamma), UreB (beta) and UreC (alpha) subunits. Three heterotrimers associate to form the active enzyme.

The protein resides in the cytoplasm. It carries out the reaction urea + 2 H2O + H(+) = hydrogencarbonate + 2 NH4(+). It functions in the pathway nitrogen metabolism; urea degradation; CO(2) and NH(3) from urea (urease route): step 1/1. This is Urease subunit gamma from Sinorhizobium fredii (strain NBRC 101917 / NGR234).